The chain runs to 289 residues: Ribosomal RNA small subunit methyltransferase A (289 aa).

S-adenosyl-L-methionine contacts are provided by N33, V35, G60, E81, D111, and N130.

It belongs to the class I-like SAM-binding methyltransferase superfamily. rRNA adenine N(6)-methyltransferase family. RsmA subfamily.

Its subcellular location is the cytoplasm. The catalysed reaction is adenosine(1518)/adenosine(1519) in 16S rRNA + 4 S-adenosyl-L-methionine = N(6)-dimethyladenosine(1518)/N(6)-dimethyladenosine(1519) in 16S rRNA + 4 S-adenosyl-L-homocysteine + 4 H(+). Functionally, specifically dimethylates two adjacent adenosines (A1518 and A1519) in the loop of a conserved hairpin near the 3'-end of 16S rRNA in the 30S particle. May play a critical role in biogenesis of 30S subunits. The polypeptide is Ribosomal RNA small subunit methyltransferase A (Corynebacterium efficiens (strain DSM 44549 / YS-314 / AJ 12310 / JCM 11189 / NBRC 100395)).